The primary structure comprises 317 residues: tRNA(Ile)-lysidine synthase (317 aa).

30–35 (SGGSDS) serves as a coordination point for ATP.

The protein belongs to the tRNA(Ile)-lysidine synthase family.

It localises to the cytoplasm. The enzyme catalyses cytidine(34) in tRNA(Ile2) + L-lysine + ATP = lysidine(34) in tRNA(Ile2) + AMP + diphosphate + H(+). Functionally, ligates lysine onto the cytidine present at position 34 of the AUA codon-specific tRNA(Ile) that contains the anticodon CAU, in an ATP-dependent manner. Cytidine is converted to lysidine, thus changing the amino acid specificity of the tRNA from methionine to isoleucine. This chain is tRNA(Ile)-lysidine synthase, found in Chlamydia felis (strain Fe/C-56) (Chlamydophila felis).